The chain runs to 455 residues: MEWDLKMPPAASWELADELENSGGGGVPAAVSSSSAAVGGGVNAGGGGRQECSVDLKLGGLGEFGGGGAQPRVAVAGEPAKGKGPAAAATGAAAAASSAPAKRPRGAAAAGQQQCPSCAVDGCKEDLSKCRDYHRRHKVCEAHSKTPLVVVSGREMRFCQQCSRFHLLQEFDEAKRSCRKRLDGHNRRRRKPQPDPMNSASYLASQQGARFSPFATPRPEASWTGMIKTEESPYYTHHQIPLGISSRQQHFVGSTSDGGRRFPFLQEGEISFGTGAGAGGVPMDQAAAAAAASVCQPLLKTVAPPPPPHGGGGSGGGKMFSDGGLTQVLDSDCALSLLSAPANSTAIDVGGGRVVVQPTEHIPMAQPLISGLQFGGGGGSSAWFAARPHHQAATGAAATAVVVSTAGFSCPVVESEQLNTVLSSNDNEMNYNGMFHVGGEGSSDGTSSSLPFSWQ.

The SBP-type zinc finger occupies 115–192 (CPSCAVDGCK…DGHNRRRRKP (78 aa)). Zn(2+) is bound by residues cysteine 118, cysteine 123, cysteine 140, histidine 143, cysteine 159, cysteine 162, histidine 166, and cysteine 178. The Bipartite nuclear localization signal motif lies at 175–191 (KRSCRKRLDGHNRRRRK). A disordered region spans residues 182–204 (LDGHNRRRRKPQPDPMNSASYLA).

As to expression, expressed in young panicles.

The protein resides in the nucleus. In terms of biological role, trans-acting factor that binds specifically to the consensus nucleotide sequence 5'-TNCGTACAA-3'. May be involved in panicle development. The sequence is that of Squamosa promoter-binding-like protein 16 (SPL16) from Oryza sativa subsp. japonica (Rice).